The following is a 308-amino-acid chain: Oxygen-dependent coproporphyrinogen-III oxidase (308 aa).

Position 100 (serine 100) interacts with substrate. Residues histidine 104 and histidine 114 each contribute to the a divalent metal cation site. Histidine 114 acts as the Proton donor in catalysis. Asparagine 116–arginine 118 contacts substrate. The a divalent metal cation site is built by histidine 153 and histidine 183. An important for dimerization region spans residues tyrosine 248–lysine 283. Glycine 266–arginine 268 provides a ligand contact to substrate.

The protein belongs to the aerobic coproporphyrinogen-III oxidase family. As to quaternary structure, homodimer. A divalent metal cation serves as cofactor.

The protein resides in the cytoplasm. It carries out the reaction coproporphyrinogen III + O2 + 2 H(+) = protoporphyrinogen IX + 2 CO2 + 2 H2O. Its pathway is porphyrin-containing compound metabolism; protoporphyrin-IX biosynthesis; protoporphyrinogen-IX from coproporphyrinogen-III (O2 route): step 1/1. Its function is as follows. Involved in the heme biosynthesis. Catalyzes the aerobic oxidative decarboxylation of propionate groups of rings A and B of coproporphyrinogen-III to yield the vinyl groups in protoporphyrinogen-IX. In Francisella tularensis subsp. holarctica (strain FTNF002-00 / FTA), this protein is Oxygen-dependent coproporphyrinogen-III oxidase.